We begin with the raw amino-acid sequence, 337 residues long: Ketol-acid reductoisomerase (NADP(+)) (337 aa).

One can recognise a KARI N-terminal Rossmann domain in the interval isoleucine 3–threonine 183. NADP(+)-binding positions include tyrosine 26 to glutamine 29, arginine 49, serine 52, serine 54, and aspartate 84 to glutamine 87. Histidine 109 is an active-site residue. Position 135 (glycine 135) interacts with NADP(+). The region spanning threonine 184 to valine 329 is the KARI C-terminal knotted domain. 4 residues coordinate Mg(2+): aspartate 192, glutamate 196, glutamate 228, and glutamate 232. Serine 253 is a substrate binding site.

It belongs to the ketol-acid reductoisomerase family. Requires Mg(2+) as cofactor.

The catalysed reaction is (2R)-2,3-dihydroxy-3-methylbutanoate + NADP(+) = (2S)-2-acetolactate + NADPH + H(+). The enzyme catalyses (2R,3R)-2,3-dihydroxy-3-methylpentanoate + NADP(+) = (S)-2-ethyl-2-hydroxy-3-oxobutanoate + NADPH + H(+). The protein operates within amino-acid biosynthesis; L-isoleucine biosynthesis; L-isoleucine from 2-oxobutanoate: step 2/4. It participates in amino-acid biosynthesis; L-valine biosynthesis; L-valine from pyruvate: step 2/4. Its function is as follows. Involved in the biosynthesis of branched-chain amino acids (BCAA). Catalyzes an alkyl-migration followed by a ketol-acid reduction of (S)-2-acetolactate (S2AL) to yield (R)-2,3-dihydroxy-isovalerate. In the isomerase reaction, S2AL is rearranged via a Mg-dependent methyl migration to produce 3-hydroxy-3-methyl-2-ketobutyrate (HMKB). In the reductase reaction, this 2-ketoacid undergoes a metal-dependent reduction by NADPH to yield (R)-2,3-dihydroxy-isovalerate. This is Ketol-acid reductoisomerase (NADP(+)) from Corynebacterium urealyticum (strain ATCC 43042 / DSM 7109).